The following is a 185-amino-acid chain: Elongation factor P (185 aa).

It belongs to the elongation factor P family.

The protein localises to the cytoplasm. The protein operates within protein biosynthesis; polypeptide chain elongation. Involved in peptide bond synthesis. Stimulates efficient translation and peptide-bond synthesis on native or reconstituted 70S ribosomes in vitro. Probably functions indirectly by altering the affinity of the ribosome for aminoacyl-tRNA, thus increasing their reactivity as acceptors for peptidyl transferase. This is Elongation factor P from Thermoanaerobacter sp. (strain X514).